The chain runs to 137 residues: Sporulation-specific cell division protein SsgB (137 aa).

It belongs to the SsgA family. Interacts with SsgA. Interacts with FtsZ (via N-terminus).

Its subcellular location is the cell septum. Functionally, involved in sporulation-specific cell division. Required for early stages of sporulation. Important in the process of growth cessation prior to sporulation-specific cell division. Recruits cell division protein FtsZ to the future septum sites and tethers the contractile ring structure (Z ring) to the cytoplasmic membrane during sporulation. Stimulates polymerization and filament length of FtsZ in vitro. The sequence is that of Sporulation-specific cell division protein SsgB from Streptomyces coelicolor (strain ATCC BAA-471 / A3(2) / M145).